A 513-amino-acid chain; its full sequence is ATP synthase subunit alpha (513 aa).

169–176 (GDRQTGKT) serves as a coordination point for ATP.

This sequence belongs to the ATPase alpha/beta chains family. As to quaternary structure, F-type ATPases have 2 components, CF(1) - the catalytic core - and CF(0) - the membrane proton channel. CF(1) has five subunits: alpha(3), beta(3), gamma(1), delta(1), epsilon(1). CF(0) has three main subunits: a(1), b(2) and c(9-12). The alpha and beta chains form an alternating ring which encloses part of the gamma chain. CF(1) is attached to CF(0) by a central stalk formed by the gamma and epsilon chains, while a peripheral stalk is formed by the delta and b chains.

It localises to the cell inner membrane. It catalyses the reaction ATP + H2O + 4 H(+)(in) = ADP + phosphate + 5 H(+)(out). In terms of biological role, produces ATP from ADP in the presence of a proton gradient across the membrane. The alpha chain is a regulatory subunit. In Enterobacter sp. (strain 638), this protein is ATP synthase subunit alpha.